A 245-amino-acid polypeptide reads, in one-letter code: tRNA1(Val) (adenine(37)-N6)-methyltransferase (245 aa).

Belongs to the methyltransferase superfamily. tRNA (adenine-N(6)-)-methyltransferase family.

Its subcellular location is the cytoplasm. It catalyses the reaction adenosine(37) in tRNA1(Val) + S-adenosyl-L-methionine = N(6)-methyladenosine(37) in tRNA1(Val) + S-adenosyl-L-homocysteine + H(+). Functionally, specifically methylates the adenine in position 37 of tRNA(1)(Val) (anticodon cmo5UAC). This chain is tRNA1(Val) (adenine(37)-N6)-methyltransferase, found in Escherichia coli (strain UTI89 / UPEC).